Consider the following 476-residue polypeptide: MDNLAAIILAAGKGTRMKSGIVKVMHPLAGAPMVAWPVAVARQAGAGRIVAVVGHQAERLREHFSNDADITLAVQEEQLGTGHAVACAAGDLSGFSGKVLILCGDVPLIRTETLRAMVTAHEATGAVLTVLTARQENPHGYGRIIRGFDGRVIRIVEEKDATPDERSRTEVNAGIYCAEASFLFDAVKRIGNDNAQGEYYLTDIITMANDRGLRCTAHPVADPVEVMGINDRVQLAEAARHARRRIAEEHMLNGVTLVDPAATYIDQGVVIGADTTIQPGVQIAGGCRVGEGCTIEAGAIIKGSELGDRCVVESRAVIRGCRLGSDVVIKAGTVMEDSTVMDHAAIGPMAHLRPGSELGAHVKIGNFVETKKIVMGEGSKASHLTYLGDATIGRNVNVGCGTITCNYDGVNKHRTVIGDDVFVGSDVQFVAPVTIGSNTLIAAGTTVTRDVPADSLAIARTPQINKEGWKLRKRDQ.

Positions 1-232 (MDNLAAIILA…PVEVMGINDR (232 aa)) are pyrophosphorylase. Residues 9–12 (LAAG), Lys23, Gln75, and 80–81 (GT) each bind UDP-N-acetyl-alpha-D-glucosamine. Asp105 lines the Mg(2+) pocket. UDP-N-acetyl-alpha-D-glucosamine is bound by residues Gly142, Glu157, Asn172, and Asn230. Residue Asn230 participates in Mg(2+) binding. The linker stretch occupies residues 233-253 (VQLAEAARHARRRIAEEHMLN). Residues 254–476 (GVTLVDPAAT…EGWKLRKRDQ (223 aa)) form an N-acetyltransferase region. UDP-N-acetyl-alpha-D-glucosamine contacts are provided by Arg353 and Lys371. The active-site Proton acceptor is the His383. UDP-N-acetyl-alpha-D-glucosamine-binding residues include Tyr386 and Asn397. Residues 406 to 407 (NY), Ser425, Ala443, and Arg460 each bind acetyl-CoA.

This sequence in the N-terminal section; belongs to the N-acetylglucosamine-1-phosphate uridyltransferase family. In the C-terminal section; belongs to the transferase hexapeptide repeat family. In terms of assembly, homotrimer. The cofactor is Mg(2+).

The protein resides in the cytoplasm. The enzyme catalyses alpha-D-glucosamine 1-phosphate + acetyl-CoA = N-acetyl-alpha-D-glucosamine 1-phosphate + CoA + H(+). It catalyses the reaction N-acetyl-alpha-D-glucosamine 1-phosphate + UTP + H(+) = UDP-N-acetyl-alpha-D-glucosamine + diphosphate. The protein operates within nucleotide-sugar biosynthesis; UDP-N-acetyl-alpha-D-glucosamine biosynthesis; N-acetyl-alpha-D-glucosamine 1-phosphate from alpha-D-glucosamine 6-phosphate (route II): step 2/2. It participates in nucleotide-sugar biosynthesis; UDP-N-acetyl-alpha-D-glucosamine biosynthesis; UDP-N-acetyl-alpha-D-glucosamine from N-acetyl-alpha-D-glucosamine 1-phosphate: step 1/1. It functions in the pathway bacterial outer membrane biogenesis; LPS lipid A biosynthesis. In terms of biological role, catalyzes the last two sequential reactions in the de novo biosynthetic pathway for UDP-N-acetylglucosamine (UDP-GlcNAc). The C-terminal domain catalyzes the transfer of acetyl group from acetyl coenzyme A to glucosamine-1-phosphate (GlcN-1-P) to produce N-acetylglucosamine-1-phosphate (GlcNAc-1-P), which is converted into UDP-GlcNAc by the transfer of uridine 5-monophosphate (from uridine 5-triphosphate), a reaction catalyzed by the N-terminal domain. The protein is Bifunctional protein GlmU of Geobacter sulfurreducens (strain ATCC 51573 / DSM 12127 / PCA).